Reading from the N-terminus, the 363-residue chain is Phospho-N-acetylmuramoyl-pentapeptide-transferase (363 aa).

A run of 11 helical transmembrane segments spans residues 4-24, 28-48, 72-92, 96-116, 129-149, 169-189, 200-220, 241-261, 266-286, 294-314, and 342-362; these read NLLV…NVIV, IAIL…IKYF, TPTM…LMLA, NIYV…GLID, INAT…CMIV, LTID…IGSS, GLVT…CYLA, ELTV…WYNI, IFMG…ISVI, GIIG…IYSI, and IVSR…SSLI.

Belongs to the glycosyltransferase 4 family. MraY subfamily. The cofactor is Mg(2+).

It is found in the cell inner membrane. It carries out the reaction UDP-N-acetyl-alpha-D-muramoyl-L-alanyl-gamma-D-glutamyl-meso-2,6-diaminopimeloyl-D-alanyl-D-alanine + di-trans,octa-cis-undecaprenyl phosphate = di-trans,octa-cis-undecaprenyl diphospho-N-acetyl-alpha-D-muramoyl-L-alanyl-D-glutamyl-meso-2,6-diaminopimeloyl-D-alanyl-D-alanine + UMP. It functions in the pathway cell wall biogenesis; peptidoglycan biosynthesis. Catalyzes the initial step of the lipid cycle reactions in the biosynthesis of the cell wall peptidoglycan: transfers peptidoglycan precursor phospho-MurNAc-pentapeptide from UDP-MurNAc-pentapeptide onto the lipid carrier undecaprenyl phosphate, yielding undecaprenyl-pyrophosphoryl-MurNAc-pentapeptide, known as lipid I. This is Phospho-N-acetylmuramoyl-pentapeptide-transferase from Orientia tsutsugamushi (strain Ikeda) (Rickettsia tsutsugamushi).